Consider the following 370-residue polypeptide: Flagellar P-ring protein 1 (370 aa).

The signal sequence occupies residues 1 to 25 (MSVLIKTRHCFVLLGLWLVLPTASA).

This sequence belongs to the FlgI family. In terms of assembly, the basal body constitutes a major portion of the flagellar organelle and consists of four rings (L,P,S, and M) mounted on a central rod.

The protein resides in the periplasm. It localises to the bacterial flagellum basal body. Its function is as follows. Assembles around the rod to form the L-ring and probably protects the motor/basal body from shearing forces during rotation. The polypeptide is Flagellar P-ring protein 1 (Yersinia pestis).